Reading from the N-terminus, the 553-residue chain is MFGEGNKPTEPVPAYDAGQDPFQGPNASKNQYQGSAADYNGAPPPPASQPGNQYQFRQDQYYNLNAEGEGAPIGSFEEKFPVEGEDSKPKWNDWPFTIFFAGCVIAFIVVAAITLRAWSQNSSSQGSGVYDGANTGTLTTNSAIMLAISCIIAFVFSIIGIVLARMFPKFFIIAGILFNIIAGLATAIMYLSLKYYSAGIVFLVFTAICALFYWRMRHRIPFTVAVLKTVMDVMKSYPQTWFVTLIGSIIATAFSILFSAVIVATYMKYDDKANNPGCSTNGGSCSNAKLIGLLVLVFFCGYYIAEVIRNVIHCTVSGIFGAWYYFSKSDQGMPKWPGFGALKRSLTYSFGSICFGSLIVTIIETLKAVLRLAVDGVMGGGGADNGWMQCLALIANWIFSFLEWLARYFNHYAYVFIALYGKPYLRAAKETWYMLREKGIDALINDNLVNVALSFFTLFTCYITTLFAYLYLRYTDPNYNDNNNFTPALMAFAFVIAMEICNVITETIRSGTATFFVALGNDPEVFHLSYPERFDEIFRAYPEVLKKLSHQNV.

The disordered stretch occupies residues 1 to 53 (MFGEGNKPTEPVPAYDAGQDPFQGPNASKNQYQGSAADYNGAPPPPASQPGNQ). At 1-94 (MFGEGNKPTE…EDSKPKWNDW (94 aa)) the chain is on the cytoplasmic side. Residues 25 to 34 (PNASKNQYQG) are compositionally biased toward polar residues. The helical transmembrane segment at 95–115 (PFTIFFAGCVIAFIVVAAITL) threads the bilayer. Over 116-142 (RAWSQNSSSQGSGVYDGANTGTLTTNS) the chain is Extracellular. The N-linked (GlcNAc...) asparagine glycan is linked to Asn-121. Residues 143 to 163 (AIMLAISCIIAFVFSIIGIVL) traverse the membrane as a helical segment. Topologically, residues 164 to 169 (ARMFPK) are cytoplasmic. The helical transmembrane segment at 170–190 (FFIIAGILFNIIAGLATAIMY) threads the bilayer. The Extracellular portion of the chain corresponds to 191–192 (LS). A helical transmembrane segment spans residues 193-213 (LKYYSAGIVFLVFTAICALFY). Residues 214 to 241 (WRMRHRIPFTVAVLKTVMDVMKSYPQTW) lie on the Cytoplasmic side of the membrane. A helical membrane pass occupies residues 242–262 (FVTLIGSIIATAFSILFSAVI). At 263–287 (VATYMKYDDKANNPGCSTNGGSCSN) the chain is on the extracellular side. The helical transmembrane segment at 288 to 308 (AKLIGLLVLVFFCGYYIAEVI) threads the bilayer. The Cytoplasmic portion of the chain corresponds to 309–349 (RNVIHCTVSGIFGAWYYFSKSDQGMPKWPGFGALKRSLTYS). A helical membrane pass occupies residues 350–370 (FGSICFGSLIVTIIETLKAVL). The Extracellular segment spans residues 371 to 385 (RLAVDGVMGGGGADN). A helical transmembrane segment spans residues 386–406 (GWMQCLALIANWIFSFLEWLA). At 407–450 (RYFNHYAYVFIALYGKPYLRAAKETWYMLREKGIDALINDNLVN) the chain is on the cytoplasmic side. Residues 451–471 (VALSFFTLFTCYITTLFAYLY) form a helical membrane-spanning segment. Over 472–484 (LRYTDPNYNDNNN) the chain is Extracellular. Residues 485–505 (FTPALMAFAFVIAMEICNVIT) traverse the membrane as a helical segment. Over 506 to 553 (ETIRSGTATFFVALGNDPEVFHLSYPERFDEIFRAYPEVLKKLSHQNV) the chain is Cytoplasmic.

The protein belongs to the CTL (choline transporter-like) family.

It is found in the cell membrane. Its function is as follows. Probably involved in transport through the plasma membrane. The sequence is that of Protein PNS1 (PNS1) from Kluyveromyces lactis (strain ATCC 8585 / CBS 2359 / DSM 70799 / NBRC 1267 / NRRL Y-1140 / WM37) (Yeast).